A 239-amino-acid chain; its full sequence is DNA repair protein RecO (239 aa).

Belongs to the RecO family.

Involved in DNA repair and RecF pathway recombination. The chain is DNA repair protein RecO from Christiangramia forsetii (strain DSM 17595 / CGMCC 1.15422 / KT0803) (Gramella forsetii).